Here is a 359-residue protein sequence, read N- to C-terminus: Phosphoserine aminotransferase (359 aa).

Residues serine 9 and arginine 42 each coordinate L-glutamate. Residues 76–77 (AS), tryptophan 102, threonine 152, aspartate 171, and glutamine 194 each bind pyridoxal 5'-phosphate. Lysine 195 is modified (N6-(pyridoxal phosphate)lysine). 236–237 (NT) contacts pyridoxal 5'-phosphate.

It belongs to the class-V pyridoxal-phosphate-dependent aminotransferase family. SerC subfamily. In terms of assembly, homodimer. Pyridoxal 5'-phosphate serves as cofactor.

It is found in the cytoplasm. It carries out the reaction O-phospho-L-serine + 2-oxoglutarate = 3-phosphooxypyruvate + L-glutamate. It catalyses the reaction 4-(phosphooxy)-L-threonine + 2-oxoglutarate = (R)-3-hydroxy-2-oxo-4-phosphooxybutanoate + L-glutamate. The protein operates within amino-acid biosynthesis; L-serine biosynthesis; L-serine from 3-phospho-D-glycerate: step 2/3. It participates in cofactor biosynthesis; pyridoxine 5'-phosphate biosynthesis; pyridoxine 5'-phosphate from D-erythrose 4-phosphate: step 3/5. Catalyzes the reversible conversion of 3-phosphohydroxypyruvate to phosphoserine and of 3-hydroxy-2-oxo-4-phosphonooxybutanoate to phosphohydroxythreonine. This is Phosphoserine aminotransferase from Marinomonas sp. (strain MWYL1).